The following is a 1881-amino-acid chain: Endoribonuclease Dicer-S (1881 aa).

Residues 41–217 (LLEAALDHNI…DLEEKIQNLE (177 aa)) enclose the Helicase ATP-binding domain. 54–61 (LNSGSGKT) contributes to the ATP binding site. Positions 165–168 (DECH) match the DECH box motif. The 170-residue stretch at 425 to 594 (SFPSPFTNIL…SMDCGNTESE (170 aa)) folds into the Helicase C-terminal domain. Residues 622-714 (AIGHINRYCA…MPVGKETVKY (93 aa)) enclose the Dicer dsRNA-binding fold domain. Positions 887–1034 (KFVEDIEKSE…LVPELCAIHP (148 aa)) constitute a PAZ domain. RNase III domains lie at 1249-1380 (TSDI…ETSG) and 1625-1783 (FENF…MDSG). Positions 1293, 1371, 1374, 1664, 1769, and 1772 each coordinate Mg(2+). Positions 1808–1873 (VPRSPVRELL…ARRALRSLKA (66 aa)) constitute a DRBM domain.

This sequence belongs to the helicase family. Dicer subfamily. As to quaternary structure, component of the RISC loading complex (RLC), or micro-RNA (miRNA) loading complex (miRLC), which is composed of dicer1, ago2 and tarbp2; dicer1 and tarbp2 are required to process precursor miRNAs (pre-miRNAs) to mature miRNAs and then load them onto ago2. Note that the trimeric RLC/miRLC is also referred to as RISC. The cofactor is Mg(2+). Requires Mn(2+) as cofactor.

It localises to the cytoplasm. It catalyses the reaction Endonucleolytic cleavage to 5'-phosphomonoester.. In terms of biological role, double-stranded RNA (dsRNA) endoribonuclease playing a central role in short dsRNA-mediated post-transcriptional gene silencing. Cleaves naturally occurring long dsRNAs and short hairpin pre-microRNAs (miRNA) into fragments of twenty-one to twenty-three nucleotides with 3' overhang of two nucleotides, producing respectively short interfering RNAs (siRNA) and mature microRNAs. SiRNAs and miRNAs serve as guide to direct the RNA-induced silencing complex (RISC) to complementary RNAs to degrade them or prevent their translation. Gene silencing mediated by siRNAs, also called RNA interference, controls the elimination of transcripts from mobile and repetitive DNA elements of the genome but also the degradation of exogenous RNA of viral origin for instance. The miRNA pathway on the other side is a mean to specifically regulate the expression of target genes. During embryonic development, at the left-right organizer, post-transcriptionally regulates the expression of dand5 in flow sensor cells. In post-flow stages, acts along with Bicc1 to repress dand5 mRNA translation and decay. Decreased Dand5 expression lifts repression of Nodal and defines leftness by induction of the lateral plate mesoderm Nodal signaling cascade. The polypeptide is Endoribonuclease Dicer-S (dicer1.S) (Xenopus laevis (African clawed frog)).